A 53-amino-acid chain; its full sequence is TSTTLVKCACEPCLCNVDPSKAIDRNGLYYCCEACADGHTGGSKGCGHTGCNC.

This sequence belongs to the metallothionein superfamily. Type 14 family.

Functionally, this protein complexes cadmium, zinc and copper. The sequence is that of Metallothionein from Synechococcus sp.